A 45-amino-acid polypeptide reads, in one-letter code: Large ribosomal subunit protein bL34 (45 aa).

It belongs to the bacterial ribosomal protein bL34 family.

The sequence is that of Large ribosomal subunit protein bL34 from Corynebacterium urealyticum (strain ATCC 43042 / DSM 7109).